Reading from the N-terminus, the 210-residue chain is Ion-translocating oxidoreductase complex subunit G (210 aa).

Residues 9–29 (SLVLALFAIAATALVTITYAL) form a helical membrane-spanning segment. T176 is modified (FMN phosphoryl threonine).

It belongs to the RnfG family. As to quaternary structure, the complex is composed of six subunits: RnfA, RnfB, RnfC, RnfD, RnfE and RnfG. FMN serves as cofactor.

The protein resides in the cell inner membrane. Its function is as follows. Part of a membrane-bound complex that couples electron transfer with translocation of ions across the membrane. The chain is Ion-translocating oxidoreductase complex subunit G from Aliivibrio fischeri (strain ATCC 700601 / ES114) (Vibrio fischeri).